A 355-amino-acid polypeptide reads, in one-letter code: Oligopeptide transport ATP-binding protein AmiE (355 aa).

Residues 9-260 form the ABC transporter domain; that stretch reads LTARDIVVEF…PRHPYTWSLL (252 aa). Residue 45-52 participates in ATP binding; it reads GESGSGKS.

Belongs to the ABC transporter superfamily.

The protein localises to the cell membrane. In terms of biological role, part of the binding-protein-dependent transport system for oligopeptides. Probably responsible for energy coupling to the transport system. The sequence is that of Oligopeptide transport ATP-binding protein AmiE (amiE) from Streptococcus pneumoniae serotype 4 (strain ATCC BAA-334 / TIGR4).